The sequence spans 326 residues: MLDKHERNINYMRISLTDRCNLRCRYCMPETGVDNLTHYSILSLEEMARLVRIASELGIQKIRLTGGEPLVRRNVPQLISYIAQIPRIDDIALTTNGTLFAALAEELKTAGLNRINFSLDSLVPEKFKYITRRGDLSKVKEAIFKALELDMHPVKINMVVIRGFNDDEIIDFVELARKYPLHVRFIEFMPVGDLLFWKKDRMMPAQDIKAYIEESYVLTPQKNILGNGPARYYSLEGGEGSLGFISPMSNHFCGECNRIRLTAEGGLRGCLYDKREVNLKTALKNGSSDEEIKELFIWAIKAKPARHHMNNGWGEENKRKMYQIGG.

The Radical SAM core domain maps to 4–227; the sequence is KHERNINYMR…LTPQKNILGN (224 aa). Arg-13 serves as a coordination point for GTP. Residues Cys-20 and Cys-24 each contribute to the [4Fe-4S] cluster site. Tyr-26 contributes to the S-adenosyl-L-methionine binding site. Cys-27 provides a ligand contact to [4Fe-4S] cluster. Arg-63 is a binding site for GTP. Gly-67 contributes to the S-adenosyl-L-methionine binding site. Thr-94 provides a ligand contact to GTP. Ser-118 contributes to the S-adenosyl-L-methionine binding site. Residue Lys-155 participates in GTP binding. Residue Met-189 participates in S-adenosyl-L-methionine binding. Residues Cys-253 and Cys-256 each contribute to the [4Fe-4S] cluster site. 258–260 is a binding site for GTP; sequence RIR. Cys-270 is a [4Fe-4S] cluster binding site.

Belongs to the radical SAM superfamily. MoaA family. Monomer and homodimer. The cofactor is [4Fe-4S] cluster.

The catalysed reaction is GTP + AH2 + S-adenosyl-L-methionine = (8S)-3',8-cyclo-7,8-dihydroguanosine 5'-triphosphate + 5'-deoxyadenosine + L-methionine + A + H(+). The protein operates within cofactor biosynthesis; molybdopterin biosynthesis. Functionally, catalyzes the cyclization of GTP to (8S)-3',8-cyclo-7,8-dihydroguanosine 5'-triphosphate. The chain is GTP 3',8-cyclase from Syntrophomonas wolfei subsp. wolfei (strain DSM 2245B / Goettingen).